The chain runs to 153 residues: 17.6 kDa class I heat shock protein (153 aa).

The sHSP domain maps to 38-153; the sequence is ETAAIVNARI…PMVKAIDISG (116 aa).

Belongs to the small heat shock protein (HSP20) family. As to quaternary structure, forms oligomeric structures.

The protein localises to the cytoplasm. This chain is 17.6 kDa class I heat shock protein (HSP17.6), found in Helianthus annuus (Common sunflower).